A 406-amino-acid polypeptide reads, in one-letter code: Tyrosine--tRNA ligase (406 aa).

Tyr-35 lines the L-tyrosine pocket. The 'HIGH' region signature appears at 40 to 49 (PTADSLHVGH). Tyr-168 and Gln-172 together coordinate L-tyrosine. The 'KMSKS' region signature appears at 228–232 (KMGKT). Lys-231 is a binding site for ATP. Residues 340–404 (STVLDIIAKT…RGKKNYNKIE (65 aa)) form the S4 RNA-binding domain.

The protein belongs to the class-I aminoacyl-tRNA synthetase family. TyrS type 1 subfamily. In terms of assembly, homodimer.

The protein resides in the cytoplasm. The enzyme catalyses tRNA(Tyr) + L-tyrosine + ATP = L-tyrosyl-tRNA(Tyr) + AMP + diphosphate + H(+). In terms of biological role, catalyzes the attachment of tyrosine to tRNA(Tyr) in a two-step reaction: tyrosine is first activated by ATP to form Tyr-AMP and then transferred to the acceptor end of tRNA(Tyr). This is Tyrosine--tRNA ligase from Clostridium botulinum (strain Alaska E43 / Type E3).